The chain runs to 287 residues: ATP synthase gamma chain (287 aa).

It belongs to the ATPase gamma chain family. As to quaternary structure, F-type ATPases have 2 components, CF(1) - the catalytic core - and CF(0) - the membrane proton channel. CF(1) has five subunits: alpha(3), beta(3), gamma(1), delta(1), epsilon(1). CF(0) has three main subunits: a, b and c.

It is found in the cell inner membrane. Functionally, produces ATP from ADP in the presence of a proton gradient across the membrane. The gamma chain is believed to be important in regulating ATPase activity and the flow of protons through the CF(0) complex. In Geotalea daltonii (strain DSM 22248 / JCM 15807 / FRC-32) (Geobacter daltonii), this protein is ATP synthase gamma chain.